A 377-amino-acid chain; its full sequence is Protein RecA (377 aa).

A compositionally biased stretch (polar residues) spans 1–13; the sequence is MSNEGKPLQSTES. The segment at 1–20 is disordered; that stretch reads MSNEGKPLQSTESTKIDAKS. ATP is bound at residue 82–89; sequence GPESSGKT. Positions 346–377 are disordered; that stretch reads GSEVSANSMRPLASAARQASSRPKLSQVSANG. The span at 362–377 shows a compositional bias: polar residues; that stretch reads RQASSRPKLSQVSANG.

Belongs to the RecA family.

Its subcellular location is the cytoplasm. Functionally, can catalyze the hydrolysis of ATP in the presence of single-stranded DNA, the ATP-dependent uptake of single-stranded DNA by duplex DNA, and the ATP-dependent hybridization of homologous single-stranded DNAs. It interacts with LexA causing its activation and leading to its autocatalytic cleavage. In Prochlorococcus marinus (strain NATL1A), this protein is Protein RecA.